Here is a 368-residue protein sequence, read N- to C-terminus: tRNA-specific 2-thiouridylase MnmA (368 aa).

ATP contacts are provided by residues 11–18 (GMSGGVDS) and methionine 37. Positions 97-99 (NPD) are interaction with target base in tRNA. The active-site Nucleophile is the cysteine 102. Residues cysteine 102 and cysteine 199 are joined by a disulfide bond. Residue glycine 127 participates in ATP binding. The interval 149 to 151 (KDQ) is interaction with tRNA. The Cysteine persulfide intermediate role is filled by cysteine 199. Residues 311-312 (RY) are interaction with tRNA.

It belongs to the MnmA/TRMU family.

The protein resides in the cytoplasm. The enzyme catalyses S-sulfanyl-L-cysteinyl-[protein] + uridine(34) in tRNA + AH2 + ATP = 2-thiouridine(34) in tRNA + L-cysteinyl-[protein] + A + AMP + diphosphate + H(+). Its function is as follows. Catalyzes the 2-thiolation of uridine at the wobble position (U34) of tRNA, leading to the formation of s(2)U34. The chain is tRNA-specific 2-thiouridylase MnmA from Baumannia cicadellinicola subsp. Homalodisca coagulata.